A 206-amino-acid polypeptide reads, in one-letter code: Glycerol-3-phosphate acyltransferase 1 (206 aa).

5 helical membrane passes run 7-27 (LVIG…KIFL), 54-74 (ILTC…VYFI), 81-101 (DLSF…WNHF), 114-134 (IVFF…FLVI), and 155-175 (WINF…IMIF).

The protein belongs to the PlsY family. As to quaternary structure, probably interacts with PlsX.

It localises to the cell membrane. It carries out the reaction an acyl phosphate + sn-glycerol 3-phosphate = a 1-acyl-sn-glycero-3-phosphate + phosphate. It participates in lipid metabolism; phospholipid metabolism. Functionally, catalyzes the transfer of an acyl group from acyl-phosphate (acyl-PO(4)) to glycerol-3-phosphate (G3P) to form lysophosphatidic acid (LPA). This enzyme utilizes acyl-phosphate as fatty acyl donor, but not acyl-CoA or acyl-ACP. The protein is Glycerol-3-phosphate acyltransferase 1 of Lactobacillus johnsonii (strain CNCM I-12250 / La1 / NCC 533).